The sequence spans 454 residues: Bifunctional protein GlmU (454 aa).

The pyrophosphorylase stretch occupies residues 1-227 (MSKLSVVILA…MMEVEGANNR (227 aa)). Residues 9-12 (LAAG), lysine 23, glutamine 74, 79-80 (GT), 101-103 (YGD), glycine 138, glutamate 152, asparagine 167, and asparagine 225 contribute to the UDP-N-acetyl-alpha-D-glucosamine site. Aspartate 103 contributes to the Mg(2+) binding site. Position 225 (asparagine 225) interacts with Mg(2+). Positions 228-248 (LQLAALERYFQRKQATALLLA) are linker. Positions 249-454 (GVSLADPERF…ADWERPSKKK (206 aa)) are N-acetyltransferase. 2 residues coordinate UDP-N-acetyl-alpha-D-glucosamine: arginine 331 and lysine 349. The Proton acceptor role is filled by histidine 361. Positions 364 and 375 each coordinate UDP-N-acetyl-alpha-D-glucosamine. Acetyl-CoA-binding positions include alanine 378, 384 to 385 (NY), serine 403, alanine 421, and arginine 438.

In the N-terminal section; belongs to the N-acetylglucosamine-1-phosphate uridyltransferase family. This sequence in the C-terminal section; belongs to the transferase hexapeptide repeat family. In terms of assembly, homotrimer. The cofactor is Mg(2+).

Its subcellular location is the cytoplasm. The enzyme catalyses alpha-D-glucosamine 1-phosphate + acetyl-CoA = N-acetyl-alpha-D-glucosamine 1-phosphate + CoA + H(+). It carries out the reaction N-acetyl-alpha-D-glucosamine 1-phosphate + UTP + H(+) = UDP-N-acetyl-alpha-D-glucosamine + diphosphate. The protein operates within nucleotide-sugar biosynthesis; UDP-N-acetyl-alpha-D-glucosamine biosynthesis; N-acetyl-alpha-D-glucosamine 1-phosphate from alpha-D-glucosamine 6-phosphate (route II): step 2/2. Its pathway is nucleotide-sugar biosynthesis; UDP-N-acetyl-alpha-D-glucosamine biosynthesis; UDP-N-acetyl-alpha-D-glucosamine from N-acetyl-alpha-D-glucosamine 1-phosphate: step 1/1. It functions in the pathway bacterial outer membrane biogenesis; LPS lipid A biosynthesis. In terms of biological role, catalyzes the last two sequential reactions in the de novo biosynthetic pathway for UDP-N-acetylglucosamine (UDP-GlcNAc). The C-terminal domain catalyzes the transfer of acetyl group from acetyl coenzyme A to glucosamine-1-phosphate (GlcN-1-P) to produce N-acetylglucosamine-1-phosphate (GlcNAc-1-P), which is converted into UDP-GlcNAc by the transfer of uridine 5-monophosphate (from uridine 5-triphosphate), a reaction catalyzed by the N-terminal domain. The chain is Bifunctional protein GlmU from Actinobacillus succinogenes (strain ATCC 55618 / DSM 22257 / CCUG 43843 / 130Z).